A 705-amino-acid polypeptide reads, in one-letter code: Ribosomal RNA large subunit methyltransferase K/L (705 aa).

The THUMP domain maps to 43–154 (VVYRCCLWSR…GEKGILGFDL (112 aa)).

Belongs to the methyltransferase superfamily. RlmKL family.

It is found in the cytoplasm. It carries out the reaction guanosine(2445) in 23S rRNA + S-adenosyl-L-methionine = N(2)-methylguanosine(2445) in 23S rRNA + S-adenosyl-L-homocysteine + H(+). The enzyme catalyses guanosine(2069) in 23S rRNA + S-adenosyl-L-methionine = N(2)-methylguanosine(2069) in 23S rRNA + S-adenosyl-L-homocysteine + H(+). In terms of biological role, specifically methylates the guanine in position 2445 (m2G2445) and the guanine in position 2069 (m7G2069) of 23S rRNA. This Aliivibrio fischeri (strain MJ11) (Vibrio fischeri) protein is Ribosomal RNA large subunit methyltransferase K/L.